Reading from the N-terminus, the 355-residue chain is Protein RecA (355 aa).

74–81 (GPESSGKT) serves as a coordination point for ATP.

Belongs to the RecA family.

The protein resides in the cytoplasm. In terms of biological role, can catalyze the hydrolysis of ATP in the presence of single-stranded DNA, the ATP-dependent uptake of single-stranded DNA by duplex DNA, and the ATP-dependent hybridization of homologous single-stranded DNAs. It interacts with LexA causing its activation and leading to its autocatalytic cleavage. This Cytophaga hutchinsonii (strain ATCC 33406 / DSM 1761 / CIP 103989 / NBRC 15051 / NCIMB 9469 / D465) protein is Protein RecA.